A 569-amino-acid polypeptide reads, in one-letter code: Endonuclease/exonuclease/phosphatase family domain-containing protein 1 (569 aa).

Positions 1-20 (MGSTLGCHRSIPRDPSDLSH) are disordered. Gly-2 carries N-myristoyl glycine lipidation. Over residues 11–20 (IPRDPSDLSH) the composition is skewed to basic and acidic residues. Residues Ser-16, Ser-21, and Ser-25 each carry the phosphoserine modification. In terms of domain architecture, HhH spans 38–67 (ERLNINTATEEELMTLPGVTRAVARSIVEY). Phosphoserine occurs at positions 106, 110, 160, and 173. The segment at 200–224 (SRPPSTHTNGGLTFTAKPHPSPTSL) is disordered. The span at 202-211 (PPSTHTNGGL) shows a compositional bias: polar residues. Residue Thr-265 is modified to Phosphothreonine. The tract at residues 548–569 (EVPRNGNGVTLEPSEANVKHER) is disordered.

The polypeptide is Endonuclease/exonuclease/phosphatase family domain-containing protein 1 (Eepd1) (Rattus norvegicus (Rat)).